The chain runs to 239 residues: Derlin-2 (239 aa).

The Cytoplasmic portion of the chain corresponds to 1-57; it reads MAYQSLRLEYLQIPPVSRAYTTACVLTTAAVQLELITPFQLYFNPELIFKHFQIWRL. A helical membrane pass occupies residues 58-78; the sequence is ITNFLFFGPVGFNFLFNMIFL. Over 79-96 the chain is Lumenal; that stretch reads YRYCRMLEEGSFRGRTAD. The chain crosses the membrane as a helical span at residues 97 to 117; that stretch reads FVFMFLFGGFLMTLFGLFVSL. Residues 118–150 lie on the Cytoplasmic side of the membrane; the sequence is VFLGQAFTIMLVYVWSRRNPYVRMNFFGLLNFQ. A helical transmembrane segment spans residues 151–171; that stretch reads APFLPWVLMGFSLLLGNSIIV. Position 172 (Asp172) is a topological domain, lumenal. The helical transmembrane segment at 173–193 threads the bilayer; that stretch reads LLGIAVGHIYFFLEDIFPNQP. The Cytoplasmic segment spans residues 194 to 239; it reads GGIRILKTPSILRTIFDTPDEDPNYNPLPEERPGGFAWGEGQRLGG. The disordered stretch occupies residues 214 to 239; it reads EDPNYNPLPEERPGGFAWGEGQRLGG. The span at 229–239 shows a compositional bias: gly residues; the sequence is FAWGEGQRLGG.

This sequence belongs to the derlin family. In terms of assembly, forms homo- and heterooligomers with DERL3 and, to a lesser extent, with DERL1. Interacts with the SEL1L/SYVN1 and VCP/SELENOS protein complexes. Mediates association between VCP and EDEM1, as well as that between VCP and the misfolded glycoproteins. Interacts with OS9. Interacts with SELENOK and SELENOS. Interacts with the signal recognition particle/SRP and the SRP receptor; in the process of endoplasmic reticulum stress-induced pre-emptive quality control. Interacts with CCDC47. In terms of tissue distribution, widely expressed, with lowest levels in brain and heart.

The protein resides in the endoplasmic reticulum membrane. Functionally, functional component of endoplasmic reticulum-associated degradation (ERAD) for misfolded lumenal glycoproteins, but not that of misfolded nonglycoproteins. May act by forming a channel that allows the retrotranslocation of misfolded glycoproteins into the cytosol where they are ubiquitinated and degraded by the proteasome. May mediate the interaction between VCP and misfolded glycoproteins. May also be involved in endoplasmic reticulum stress-induced pre-emptive quality control, a mechanism that selectively attenuates the translocation of newly synthesized proteins into the endoplasmic reticulum and reroutes them to the cytosol for proteasomal degradation. The sequence is that of Derlin-2 from Mus musculus (Mouse).